A 414-amino-acid chain; its full sequence is Snake venom metalloproteinase atrolysin-D (414 aa).

The signal sequence occupies residues 1–20; the sequence is MIEVLLVTICLAVFPYQGSS. The propeptide occupies 21 to 190; sequence IILESGNVND…KASDLNLNPD (170 aa). At Gln191 the chain carries Pyrrolidone carboxylic acid. Residues 197 to 393 form the Peptidase M12B domain; that stretch reads RYIELVVVAD…YKPQCILNKP (197 aa). The Ca(2+) site is built by Glu200 and Asp284. Intrachain disulfides connect Cys308/Cys388 and Cys348/Cys355. Zn(2+) is bound at residue His333. The active site involves Glu334. 2 residues coordinate Zn(2+): His337 and His343. 2 residues coordinate Ca(2+): Cys388 and Asn391. A propeptide spanning residues 394 to 414 is cleaved from the precursor; the sequence is LRIDPVSTPVSGNELLEAGEE.

The protein belongs to the venom metalloproteinase (M12B) family. P-I subfamily. As to quaternary structure, monomer. The cofactor is Zn(2+). In terms of processing, the N-terminus is blocked. In terms of tissue distribution, expressed by the venom gland.

It localises to the secreted. It carries out the reaction Cleavage of 5-His-|-Leu-6, 10-His-|-Leu-11, 14-Ala-|-Leu-15, 16-Tyr-|-Leu-17 and 23-Gly-|-Phe-24 of insulin B chain. With small molecule substrates prefers hydrophobic residue at P2' and small residue such as Ala, Gly at P1.. Snake venom zinc metalloproteinase that causes hemorrhage by provoking the degradation of the sub-endothelial matrix proteins (fibronectin, laminin, type IV collagen, nidogen, and gelatins). In Crotalus atrox (Western diamondback rattlesnake), this protein is Snake venom metalloproteinase atrolysin-D.